Reading from the N-terminus, the 136-residue chain is Small ribosomal subunit protein eS12 (136 aa).

It belongs to the eukaryotic ribosomal protein eS12 family.

This Dictyostelium discoideum (Social amoeba) protein is Small ribosomal subunit protein eS12 (rps12).